Here is a 1183-residue protein sequence, read N- to C-terminus: Rab11 family-interacting protein 3 (1183 aa).

Residues 423-448 form a disordered region; the sequence is AEDPSTESLPRKNGQEESKSALPVST. Residues 431 to 441 show a composition bias toward basic and acidic residues; it reads LPRKNGQEESK. EF-hand domains lie at 706 to 741 and 738 to 773; these read EEQS…YGAE and YGAE…ISNE. Ca(2+) is bound by residues D719, D721, D723, E730, D751, S753, and D762. Positions 902 to 1121 form a coiled coil; sequence ELEKDSLESE…NGQIINLSIQ (220 aa). Residues 911–1015 are ARF-binding domain (ABD); the sequence is EEQHARLRQE…LQDEADDITQ (105 aa). The disordered stretch occupies residues 1005–1044; sequence KLQDEADDITQRLNEESESRRKMSDKLSHERHTNQKEKEC. Residues 1121-1183 enclose the FIP-RBD domain; sequence QGAKSLFTES…ESNPSILEVK (63 aa).

It is found in the recycling endosome membrane. Its subcellular location is the cytoplasm. It localises to the cytoskeleton. The protein resides in the microtubule organizing center. The protein localises to the centrosome. It is found in the cleavage furrow. Its subcellular location is the midbody. It localises to the golgi apparatus membrane. The protein resides in the golgi apparatus. The protein localises to the trans-Golgi network membrane. Downstream effector molecule for Rab11 GTPase which acts as a regulator of endocytic trafficking, cytokinesis and intracellular ciliogenesis by participating in membrane delivery. This Danio rerio (Zebrafish) protein is Rab11 family-interacting protein 3 (rab11fip3).